The following is a 162-amino-acid chain: MEIRVPVQPSWLRRASAPLPGFSTPGRLFDQRFGEGLLEAELASLCPAAIAPYYLRAPSVALPTAQVPTDPGYFSVLLDVKHFSPEEISVKVVGDHVEVHARHEERPDEHGFIAREFHRRYRLPPGVDPAAVTSALSPEGVLSIQATPASAQASLPSPPAAK.

An involved in stabilization of the HSPB1:HSBP6 heterodimer region spans residues 1–72 (MEIRVPVQPS…PTAQVPTDPG (72 aa)). Ser16 carries the post-translational modification Phosphoserine. Gln31 participates in a covalent cross-link: Isoglutamyl lysine isopeptide (Gln-Lys) (interchain with K-162). A sHSP domain is found at 56 to 162 (RAPSVALPTA…ASLPSPPAAK (107 aa)). Gln66 is modified (deamidated glutamine). Ser157 carries the post-translational modification Phosphoserine. An Isoglutamyl lysine isopeptide (Lys-Gln) (interchain with Q-31) cross-link involves residue Lys162.

The protein belongs to the small heat shock protein (HSP20) family. In terms of assembly, homodimer. Small heat shock proteins form high molecular mass oligomers containing variable number of monomers; these oligomers display a very flexible quaternary structure easily exchanging their subunits. Heterooligomer with HSPB1; formed through oligomerization of HSPB1:HSBP6 dimers; subunit exchange leads to formation of at least two different heterooligomeric complexes, differing in variable quantities of HSPB1 and HSPB6 homodimers in addition to HSPB1:HSPB6 heterodimers. Heterooligomer with CRYAB; large heterooligomers consist of CRYAB homodimers and HSPB5:HSPB6 heterodimers but lacking HSPB6 homodimers. Interacts with BAG3. Interacts (phosphorylated) with YWHAZ. Interacts with PDE4A and PDE4D; required for maintenance of the non-phosphorylated state of HSPB6 under basal conditions. Interacts with KDR. Interacts with PRKD1. The N-terminus is blocked. In terms of processing, phosphorylated at Ser-16 by PKA and probably PKD1K; required to protect cardiomyocytes from apoptosis. As to expression, widely expressed. High expression in muscle tissues.

The protein resides in the cytoplasm. The protein localises to the nucleus. It localises to the secreted. Its function is as follows. Small heat shock protein which functions as a molecular chaperone probably maintaining denatured proteins in a folding-competent state. Seems to have versatile functions in various biological processes. Plays a role in regulating muscle function such as smooth muscle vasorelaxation and cardiac myocyte contractility. May regulate myocardial angiogenesis implicating KDR. Overexpression mediates cardioprotection and angiogenesis after induced damage. Stabilizes monomeric YWHAZ thereby supporting YWHAZ chaperone-like activity. This is Heat shock protein beta-6 (Hspb6) from Rattus norvegicus (Rat).